A 158-amino-acid chain; its full sequence is U4/U6.U5 small nuclear ribonucleoprotein 27 kDa protein (158 aa).

The segment covering 1–30 has biased composition (basic residues); sequence MGRSRSRTPPRRERRRSRSSSRDRERRRRE. Residues 1–100 are disordered; that stretch reads MGRSRSRTPP…ISAEDMQGKT (100 aa). A compositionally biased stretch (basic and acidic residues) spans 31–41; it reads RERSRSRDRDR. Residues 42 to 62 are compositionally biased toward basic residues; sequence RRSRSRSPHRRRSRSPRRHRS. Positions 69–86 are enriched in basic and acidic residues; it reads RQKDRRDDDRKDVKEKPA.

It belongs to the SNUT3 family. Part of a tri-snRNP complex.

Its subcellular location is the nucleus. May play a role in mRNA splicing. This is U4/U6.U5 small nuclear ribonucleoprotein 27 kDa protein (snrnp27) from Danio rerio (Zebrafish).